Reading from the N-terminus, the 226-residue chain is Fibrillarin-like rRNA/tRNA 2'-O-methyltransferase (226 aa).

Residues 82–83 (TT), 100–101 (EF), 125–126 (DA), and 145–148 (DVAQ) contribute to the S-adenosyl-L-methionine site.

Belongs to the methyltransferase superfamily. Fibrillarin family. Interacts with nop5. Component of box C/D small ribonucleoprotein (sRNP) particles that contain rpl7ae, FlpA and nop5, plus a guide RNA.

Functionally, involved in pre-rRNA and tRNA processing. Utilizes the methyl donor S-adenosyl-L-methionine to catalyze the site-specific 2'-hydroxyl methylation of ribose moieties in rRNA and tRNA. Site specificity is provided by a guide RNA that base pairs with the substrate. Methylation occurs at a characteristic distance from the sequence involved in base pairing with the guide RNA. This Methanosarcina barkeri (strain Fusaro / DSM 804) protein is Fibrillarin-like rRNA/tRNA 2'-O-methyltransferase.